Reading from the N-terminus, the 183-residue chain is Ribosome-recycling factor (183 aa).

Belongs to the RRF family.

It localises to the cytoplasm. Its function is as follows. Responsible for the release of ribosomes from messenger RNA at the termination of protein biosynthesis. May increase the efficiency of translation by recycling ribosomes from one round of translation to another. The protein is Ribosome-recycling factor of Deinococcus radiodurans (strain ATCC 13939 / DSM 20539 / JCM 16871 / CCUG 27074 / LMG 4051 / NBRC 15346 / NCIMB 9279 / VKM B-1422 / R1).